Consider the following 238-residue polypeptide: Large ribosomal subunit protein uL5c (238 aa).

It belongs to the universal ribosomal protein uL5 family. Part of the 50S ribosomal subunit; contacts the 5S rRNA.

It is found in the plastid. The protein resides in the chloroplast. Binds 5S rRNA, forms part of the central protuberance of the 50S subunit. The chain is Large ribosomal subunit protein uL5c (rpl5) from Phaeodactylum tricornutum (strain CCAP 1055/1).